Consider the following 103-residue polypeptide: Large ribosomal subunit protein bL21 (103 aa).

Belongs to the bacterial ribosomal protein bL21 family. Part of the 50S ribosomal subunit. Contacts protein L20.

Its function is as follows. This protein binds to 23S rRNA in the presence of protein L20. This chain is Large ribosomal subunit protein bL21, found in Shewanella putrefaciens (strain CN-32 / ATCC BAA-453).